The sequence spans 275 residues: MQAVQQEIAQALKVQPPFANAAALEAEVARRVAFIKDCLANARLKTLVLGISGGVDSLTAALLAQRAINELRAETGDKAYTFIAVRLPYQVQHDEHDAQACLDVIKADEVHTVDIAPAVRALAAEVAALKNGSPTLVDFVVGNVKARTRMVAQYTIAGARAGLVIGTDHAAEAVMGFFTKFGDGACDLAPLSGLVKNQVRAIARSFGAPESLVEKVPTADLEDLEPGKPDEASHGVTYAQIDAFLHGQPVDQAAFDIIVATYRKTQHKRELPFAP.

50 to 57 (GISGGVDS) contributes to the ATP binding site. Asp-56 contributes to the Mg(2+) binding site. Arg-147 serves as a coordination point for deamido-NAD(+). ATP is bound at residue Thr-167. Glu-172 contributes to the Mg(2+) binding site. 2 residues coordinate deamido-NAD(+): Lys-180 and Asp-187. ATP is bound by residues Lys-196 and Thr-218. 267 to 268 (HK) lines the deamido-NAD(+) pocket.

It belongs to the NAD synthetase family. Homodimer.

It carries out the reaction deamido-NAD(+) + NH4(+) + ATP = AMP + diphosphate + NAD(+) + H(+). It participates in cofactor biosynthesis; NAD(+) biosynthesis; NAD(+) from deamido-NAD(+) (ammonia route): step 1/1. In terms of biological role, catalyzes the ATP-dependent amidation of deamido-NAD to form NAD. Uses ammonia as a nitrogen source. In Pseudomonas putida (strain ATCC 700007 / DSM 6899 / JCM 31910 / BCRC 17059 / LMG 24140 / F1), this protein is NH(3)-dependent NAD(+) synthetase.